The chain runs to 485 residues: MDHENLMKYLEEFRSIRFQPDFQKVDAERNVRYCEITDFPISNISFELLETGVSQQWRNCDQNLFNEYLKTYKNGGYSQFEDLLFKIWGYSEEKERFDLPALKSFYRKMSEIVGEDEVLEKLARLVRITKSACEVLPEKIYRLVGDIESATFSHIQCASLIAWMFFSDTPRLSFIIILQKTTCVAVEKLKFLFTYFDKMSIDPPIGAVSFRKMRITHKQYLENWKLRETNLLPDVQVFDKMSIEETALCTQIDFANKRLGGGVLKGGAVQEEIRFMMCPEMMVAILLNDVTQDLEAISIVGAYVFSSYTGYSNTLKWAKITPKHSAQNNNSFRDQFGRLQTETVAIDAVRNAGTPLECLLNQLTTEKLTREVRKAAIGFLSAGDGFSKIPVVSGWWGCGAFRGNKPLKFLIQVIACGISDRPLQFCTFGDTELAKKCEEMMTLFRNNNVRTGQLFLIINSIGPPLNYSEQYVFDAIRAKINSTKA.

The protein belongs to the poly(ADP-ribose) glycohydrolase family. Expressed in head and tail neurons.

The protein localises to the cytoplasm. The enzyme catalyses [(1''-&gt;2')-ADP-alpha-D-ribose](n) + H2O = [(1''-&gt;2')-ADP-alpha-D-ribose](n-1) + ADP-D-ribose. Functionally, poly(ADP-ribose) synthesized after DNA damage is only present transiently and is rapidly degraded by poly(ADP-ribose) glycohydrolase. Poly(ADP-ribose) metabolism may be required for maintenance of the normal function of neuronal cells. The sequence is that of Poly(ADP-ribose) glycohydrolase 2 from Caenorhabditis elegans.